The primary structure comprises 124 residues: Large ribosomal subunit protein uL22c (124 aa).

The protein belongs to the universal ribosomal protein uL22 family. In terms of assembly, part of the 50S ribosomal subunit.

Its subcellular location is the plastid. It is found in the chloroplast. Its function is as follows. This protein binds specifically to 23S rRNA. In terms of biological role, the globular domain of the protein is located near the polypeptide exit tunnel on the outside of the subunit, while an extended beta-hairpin is found that lines the wall of the exit tunnel in the center of the 70S ribosome. The protein is Large ribosomal subunit protein uL22c (rpl22) of Amborella trichopoda.